The primary structure comprises 110 residues: U9-agatoxin-Ao1a (110 aa).

The N-terminal stretch at 1-17 is a signal peptide; the sequence is MKLLLAIAGLFLVQTLA. Residues 18–38 constitute a propeptide that is removed on maturation; the sequence is EDVRAHEESSFLAAVAPEEQR. 5 disulfides stabilise this stretch: Cys-40-Cys-54, Cys-47-Cys-60, Cys-51-Cys-87, Cys-53-Cys-72, and Cys-62-Cys-70.

This sequence belongs to the neurotoxin 37 family. As to expression, expressed by the venom gland.

Its subcellular location is the secreted. This is U9-agatoxin-Ao1a from Agelena orientalis (Funnel-web spider).